The sequence spans 954 residues: Kinesin-like protein KIN-14Q (954 aa).

Residues 33-155 enclose the Calponin-homology (CH) domain; sequence AMRRYDAASW…CVLALKSFSE (123 aa). One can recognise a Kinesin motor domain in the interval 374–699; that stretch reads NIRVYCRVRP…LKFAERVASV (326 aa). 457 to 464 provides a ligand contact to ATP; the sequence is GQTGSGKT. Residues 704-733 adopt a coiled-coil conformation; that stretch reads AKANKEGSEVRELKEQIATLKAALAKKEGE. The segment covering 844–855 has biased composition (basic and acidic residues); that stretch reads YDPDKQRRRAEP. 2 disordered regions span residues 844-876 and 912-954; these read YDPD…DQEM and PNLA…NTPK. Over residues 864 to 873 the composition is skewed to low complexity; that stretch reads FDAATSSPSD. The segment covering 928–954 has biased composition (polar residues); the sequence is PIRNSKQLPFSTTGGRRTRNGKINTPK.

It belongs to the TRAFAC class myosin-kinesin ATPase superfamily. Kinesin family. KIN-14 subfamily. As to quaternary structure, forms oligomers in vitro. Interacts with actin microfilaments. Binds to actin in vitro through its calponin-homology (CH) domain. In terms of tissue distribution, expressed in primary leaf, primary root, developing flower and coleoptile.

The protein localises to the cytoplasm. Its subcellular location is the cytoskeleton. The microtubule-dependent ATPase activity is regulated by actin binding. In terms of biological role, minus end-directed motor protein that transports actin filaments along microtubules. Plays a central role in the polar orientation of actin filaments along microtubules, and thus a contribution to the organization of the cytoskeletal architecture. Links the actin microfilaments with the cortical microtubules in both cycling and non-cycling cells. Required for efficient cell elongation by its participation in the premitotic nuclear positioning. The protein is Kinesin-like protein KIN-14Q of Oryza sativa subsp. japonica (Rice).